Consider the following 441-residue polypeptide: Polyketide methyltransferase ustM (441 aa).

Residues 266–368 (LEVGAGLGGT…VRKLLRGGGF (103 aa)) are methyltransferase (CMeT) domain.

This sequence belongs to the methyltransferase superfamily.

The protein operates within secondary metabolite biosynthesis. Polyketide methyltransferase; part of the gene cluster that mediates the biosynthesis of ustilaginoidins, dimeric gamma-naphthopyrones isolated from different fungal species. The first step in the biosynthesis of ustilaginoidins is the production of gamma-naphthopyrone precursor YWA1 by the non-reducing polyketide synthase ustP, via condensation of one acetyl-CoA starter unit with 6 malonyl-CoA units. YWA1 is then probably substrate of the ustZ to yield norrubrofusarin via a dehydration reaction. A key enzyme in the biosynthetic pathway is the laccase ustL, which catalyzes the oxidative dimerization of norrubrofusarin to ustilaginoidin A. It can produce the M- and P-atropisomers in varying amounts, depending on the reaction conditions. For the biosynthesis of 3-methylustilaginoid in derivatives such as chaetochromin A, a methylated derivative of YWA1 is required. The C-methylation is considered to be catalyzed by ustM, the phosphopantetheine attachment site of which indicates that it acts on the growing polyketide chain before release of the product. For the biosynthesis of chaetochromin A, it is assumed that saturation of the D2 double bond takes place before dimerization, and is probably catalyzed by an external reductase because no candidate gene was identified within the cluster. In Ustilaginoidea virens (Rice false smut fungus), this protein is Polyketide methyltransferase ustM.